A 383-amino-acid chain; its full sequence is 8-amino-7-oxononanoate synthase (383 aa).

Substrate is bound by residues Arg27 and Arg34. A pyridoxal 5'-phosphate-binding site is contributed by 114 to 115 (GY). Residue His139 participates in substrate binding. Pyridoxal 5'-phosphate-binding positions include Ser187, 212–215 (DDAH), and 232–235 (TLSK). Lys235 is modified (N6-(pyridoxal phosphate)lysine). Residue Thr344 coordinates substrate.

The protein belongs to the class-II pyridoxal-phosphate-dependent aminotransferase family. BioF subfamily. As to quaternary structure, homodimer. Requires pyridoxal 5'-phosphate as cofactor.

It carries out the reaction 6-carboxyhexanoyl-[ACP] + L-alanine + H(+) = (8S)-8-amino-7-oxononanoate + holo-[ACP] + CO2. It functions in the pathway cofactor biosynthesis; biotin biosynthesis. In terms of biological role, catalyzes the decarboxylative condensation of pimeloyl-[acyl-carrier protein] and L-alanine to produce 8-amino-7-oxononanoate (AON), [acyl-carrier protein], and carbon dioxide. This chain is 8-amino-7-oxononanoate synthase, found in Methylorubrum extorquens (strain CM4 / NCIMB 13688) (Methylobacterium extorquens).